The primary structure comprises 135 residues: Flagellar assembly factor FliW 1 (135 aa).

It belongs to the FliW family. Interacts with translational regulator CsrA and flagellin(s).

The protein localises to the cytoplasm. Functionally, acts as an anti-CsrA protein, binds CsrA and prevents it from repressing translation of its target genes, one of which is flagellin. Binds to flagellin and participates in the assembly of the flagellum. In Helicobacter pylori (strain ATCC 700392 / 26695) (Campylobacter pylori), this protein is Flagellar assembly factor FliW 1.